The primary structure comprises 222 residues: NAD(P)H-hydrate epimerase (222 aa).

A YjeF N-terminal domain is found at 9–209 (MQQIDSYTIE…DIGLRLPEDF (201 aa)). Residue 57–61 (NNGAD) coordinates (6S)-NADPHX. Residues asparagine 58 and aspartate 119 each contribute to the K(+) site. Residues 123 to 129 (GVGLNNT) and aspartate 152 each bind (6S)-NADPHX. Threonine 155 serves as a coordination point for K(+).

This sequence belongs to the NnrE/AIBP family. K(+) serves as cofactor.

The enzyme catalyses (6R)-NADHX = (6S)-NADHX. The catalysed reaction is (6R)-NADPHX = (6S)-NADPHX. Catalyzes the epimerization of the S- and R-forms of NAD(P)HX, a damaged form of NAD(P)H that is a result of enzymatic or heat-dependent hydration. This is a prerequisite for the S-specific NAD(P)H-hydrate dehydratase to allow the repair of both epimers of NAD(P)HX. In Leuconostoc citreum (strain KM20), this protein is NAD(P)H-hydrate epimerase.